We begin with the raw amino-acid sequence, 65 residues long: Large ribosomal subunit protein uL30 (65 aa).

The protein belongs to the universal ribosomal protein uL30 family. As to quaternary structure, part of the 50S ribosomal subunit.

This chain is Large ribosomal subunit protein uL30, found in Mycobacterium bovis (strain ATCC BAA-935 / AF2122/97).